Consider the following 487-residue polypeptide: Lysine--tRNA ligase (487 aa).

Residues glutamate 398 and glutamate 405 each contribute to the Mg(2+) site.

This sequence belongs to the class-II aminoacyl-tRNA synthetase family. Homodimer. Mg(2+) serves as cofactor.

It is found in the cytoplasm. The enzyme catalyses tRNA(Lys) + L-lysine + ATP = L-lysyl-tRNA(Lys) + AMP + diphosphate. The sequence is that of Lysine--tRNA ligase from Mycoplasma mobile (strain ATCC 43663 / 163K / NCTC 11711) (Mesomycoplasma mobile).